The chain runs to 78 residues: Acyl carrier protein (78 aa).

Residues 4–78 (AEIKDKVYDI…QQAIDYIVKK (75 aa)) form the Carrier domain. S39 is subject to O-(pantetheine 4'-phosphoryl)serine.

Belongs to the acyl carrier protein (ACP) family. In terms of processing, 4'-phosphopantetheine is transferred from CoA to a specific serine of apo-ACP by AcpS. This modification is essential for activity because fatty acids are bound in thioester linkage to the sulfhydryl of the prosthetic group.

The protein localises to the cytoplasm. It participates in lipid metabolism; fatty acid biosynthesis. Functionally, carrier of the growing fatty acid chain in fatty acid biosynthesis. The protein is Acyl carrier protein of Chlorobium phaeovibrioides (strain DSM 265 / 1930) (Prosthecochloris vibrioformis (strain DSM 265)).